A 626-amino-acid chain; its full sequence is NAD-dependent malic enzyme, mitochondrial (626 aa).

Residues 1 to 34 constitute a mitochondrion transit peptide; it reads MAIFSNQMRLSSTLLKRLHQRVAAAVNSSSSRNF. Residues arginine 91 and arginine 125 each contribute to the fumarate site. The Proton donor role is filled by tyrosine 146. (S)-malate is bound at residue arginine 199. Arginine 199 contributes to the NAD(+) binding site. Catalysis depends on lysine 217, which acts as the Proton acceptor. A divalent metal cation contacts are provided by glutamate 288, aspartate 289, and aspartate 312. Alanine 348 and alanine 351 together coordinate NAD(+). (S)-malate is bound by residues asparagine 467 and asparagine 512.

This sequence belongs to the malic enzymes family. In terms of assembly, heterodimer of two related subunits. Mg(2+) is required as a cofactor. Requires Mn(2+) as cofactor.

It localises to the mitochondrion matrix. The catalysed reaction is (S)-malate + NAD(+) = pyruvate + CO2 + NADH. The sequence is that of NAD-dependent malic enzyme, mitochondrial from Solanum tuberosum (Potato).